Reading from the N-terminus, the 347-residue chain is NADH-ubiquinone oxidoreductase chain 2 (347 aa).

Transmembrane regions (helical) follow at residues 1 to 21 (MNPI…TIVM), 25 to 45 (HWLT…PMLM), 59 to 79 (YFLT…INLM), 96 to 116 (IILT…FWVP), 148 to 168 (IINL…GGWG), 178 to 198 (IMAY…IYNP), 200 to 220 (LTML…MLLI), 237 to 257 (MPLI…LPPL), 274 to 294 (NSII…YFYM), and 326 to 346 (LSPL…MMIL).

Belongs to the complex I subunit 2 family. Core subunit of respiratory chain NADH dehydrogenase (Complex I) which is composed of 45 different subunits. Interacts with TMEM242.

The protein localises to the mitochondrion inner membrane. The catalysed reaction is a ubiquinone + NADH + 5 H(+)(in) = a ubiquinol + NAD(+) + 4 H(+)(out). In terms of biological role, core subunit of the mitochondrial membrane respiratory chain NADH dehydrogenase (Complex I) which catalyzes electron transfer from NADH through the respiratory chain, using ubiquinone as an electron acceptor. Essential for the catalytic activity and assembly of complex I. The protein is NADH-ubiquinone oxidoreductase chain 2 of Gardnerycteris crenulata (Striped hairy-nosed bat).